A 123-amino-acid polypeptide reads, in one-letter code: Small ribosomal subunit protein uS12 (123 aa).

Aspartate 89 carries the 3-methylthioaspartic acid modification.

It belongs to the universal ribosomal protein uS12 family. Part of the 30S ribosomal subunit. Contacts proteins S8 and S17. May interact with IF1 in the 30S initiation complex.

Functionally, with S4 and S5 plays an important role in translational accuracy. In terms of biological role, interacts with and stabilizes bases of the 16S rRNA that are involved in tRNA selection in the A site and with the mRNA backbone. Located at the interface of the 30S and 50S subunits, it traverses the body of the 30S subunit contacting proteins on the other side and probably holding the rRNA structure together. The combined cluster of proteins S8, S12 and S17 appears to hold together the shoulder and platform of the 30S subunit. The sequence is that of Small ribosomal subunit protein uS12 from Anaeromyxobacter dehalogenans (strain 2CP-1 / ATCC BAA-258).